The chain runs to 315 residues: Methionyl-tRNA formyltransferase (315 aa).

Residue 113 to 116 (SILP) coordinates (6S)-5,6,7,8-tetrahydrofolate.

The protein belongs to the Fmt family.

The catalysed reaction is L-methionyl-tRNA(fMet) + (6R)-10-formyltetrahydrofolate = N-formyl-L-methionyl-tRNA(fMet) + (6S)-5,6,7,8-tetrahydrofolate + H(+). In terms of biological role, attaches a formyl group to the free amino group of methionyl-tRNA(fMet). The formyl group appears to play a dual role in the initiator identity of N-formylmethionyl-tRNA by promoting its recognition by IF2 and preventing the misappropriation of this tRNA by the elongation apparatus. The protein is Methionyl-tRNA formyltransferase of Aliivibrio fischeri (strain MJ11) (Vibrio fischeri).